The chain runs to 257 residues: NAD kinase (257 aa).

Asp46 (proton acceptor) is an active-site residue. Residues 46-47, 116-117, Asp146, Ala154, 157-162, and Asn218 each bind NAD(+); these read DG, NE, and TAYNLS.

It belongs to the NAD kinase family. A divalent metal cation serves as cofactor.

The protein localises to the cytoplasm. It carries out the reaction NAD(+) + ATP = ADP + NADP(+) + H(+). Its function is as follows. Involved in the regulation of the intracellular balance of NAD and NADP, and is a key enzyme in the biosynthesis of NADP. Catalyzes specifically the phosphorylation on 2'-hydroxyl of the adenosine moiety of NAD to yield NADP. The protein is NAD kinase of Brucella suis biovar 1 (strain 1330).